Consider the following 287-residue polypeptide: Fructose-1,6-bisphosphatase class 1 (287 aa).

Residues Glu-67, Asp-86, Leu-88, and Asp-89 each coordinate Mg(2+). Residues 89-92 (DGSS), Tyr-195, and Lys-226 contribute to the substrate site. Residue Glu-232 participates in Mg(2+) binding.

This sequence belongs to the FBPase class 1 family. Homotetramer. The cofactor is Mg(2+).

Its subcellular location is the cytoplasm. The catalysed reaction is beta-D-fructose 1,6-bisphosphate + H2O = beta-D-fructose 6-phosphate + phosphate. Its pathway is carbohydrate biosynthesis; gluconeogenesis. The protein is Fructose-1,6-bisphosphatase class 1 of Campylobacter concisus (strain 13826).